We begin with the raw amino-acid sequence, 465 residues long: Hexokinase-4 (465 aa).

A Hexokinase domain is found at Ala-10–Ala-454. Residues Glu-67–Val-203 are hexokinase small subdomain. Asp-78 to Asn-83 is an ATP binding site. Substrate contacts are provided by residues Ser-151 to Phe-152, Thr-168 to Lys-169, and Asn-204 to Asp-205. The tract at residues Asn-204 to Glu-443 is hexokinase large subdomain. Position 228 (Thr-228) interacts with ATP. Positions 231, 256, and 290 each coordinate substrate. Residues Gly-295–Lys-296, Thr-332–Ser-336, and Ser-411–Leu-415 contribute to the ATP site.

It belongs to the hexokinase family. Monomer. Interacts with MIDN; the interaction occurs preferentially at low glucose levels and results in inhibition of hexokinase activity. Interacts with GCKR; leading to sequestration in the nucleus.

It localises to the cytoplasm. The protein localises to the nucleus. Its subcellular location is the mitochondrion. The catalysed reaction is a D-hexose + ATP = a D-hexose 6-phosphate + ADP + H(+). It catalyses the reaction D-fructose + ATP = D-fructose 6-phosphate + ADP + H(+). The enzyme catalyses D-glucose + ATP = D-glucose 6-phosphate + ADP + H(+). It carries out the reaction D-mannose + ATP = D-mannose 6-phosphate + ADP + H(+). It functions in the pathway carbohydrate metabolism; hexose metabolism. Its pathway is carbohydrate degradation; glycolysis; D-glyceraldehyde 3-phosphate and glycerone phosphate from D-glucose: step 1/4. Subject to allosteric regulation. Low glucose and high fructose-6-phosphate triggers association with the inhibitor GCKR followed by sequestration in the nucleus. Catalyzes the phosphorylation of hexose, such as D-glucose, D-fructose and D-mannose, to hexose 6-phosphate (D-glucose 6-phosphate, D-fructose 6-phosphate and D-mannose 6-phosphate, respectively). Compared to other hexokinases, has a weak affinity for D-glucose, and is effective only when glucose is abundant. Mainly expressed in pancreatic beta cells and the liver and constitutes a rate-limiting step in glucose metabolism in these tissues. Since insulin secretion parallels glucose metabolism and the low glucose affinity of GCK ensures that it can change its enzymatic activity within the physiological range of glucose concentrations, GCK acts as a glucose sensor in the pancreatic beta cell. In pancreas, plays an important role in modulating insulin secretion. In liver, helps to facilitate the uptake and conversion of glucose by acting as an insulin-sensitive determinant of hepatic glucose usage. Required to provide D-glucose 6-phosphate for the synthesis of glycogen. Mediates the initial step of glycolysis by catalyzing phosphorylation of D-glucose to D-glucose 6-phosphate. In Homo sapiens (Human), this protein is Hexokinase-4.